The chain runs to 156 residues: Arginine repressor (156 aa).

This sequence belongs to the ArgR family.

It localises to the cytoplasm. It participates in amino-acid biosynthesis; L-arginine biosynthesis [regulation]. Functionally, regulates arginine biosynthesis genes. The protein is Arginine repressor of Shewanella pealeana (strain ATCC 700345 / ANG-SQ1).